The sequence spans 325 residues: Aldo-keto reductase family 1 member A1 (325 aa).

Ala2 is subject to N-acetylalanine. Phosphoserine is present on Ser4. NADP(+) contacts are provided by residues 11–20, Thr21, and Trp22; that span reads GQKMPLIGLG. Residue Ser38 is modified to Phosphoserine. Asp45 contacts NADP(+). Tyr50 (proton donor) is an active-site residue. Lys127 is modified (N6-acetyllysine; alternate). Lys127 is modified (N6-succinyllysine; alternate). Residues Ser162, Asn163, Ser211, Leu213, Ser215, Ser216, Lys263, Ser264, Val265, Thr266, Arg269, and Asn273 each coordinate NADP(+). Ser211 is subject to Phosphoserine.

The protein belongs to the aldo/keto reductase family. Monomer.

It localises to the cytoplasm. The protein resides in the cytosol. The protein localises to the apical cell membrane. It catalyses the reaction a primary alcohol + NADP(+) = an aldehyde + NADPH + H(+). It carries out the reaction L-gulonate + NADP(+) = aldehydo-D-glucuronate + NADPH + H(+). The catalysed reaction is L-gulono-1,4-lactone + NADP(+) = D-glucurono-3,6-lactone + NADPH + H(+). The enzyme catalyses allyl alcohol + NADP(+) = acrolein + NADPH + H(+). It catalyses the reaction glycerol + NADP(+) = D-glyceraldehyde + NADPH + H(+). It carries out the reaction glycerol + NADP(+) = L-glyceraldehyde + NADPH + H(+). The catalysed reaction is hydroxyacetone + NADP(+) = methylglyoxal + NADPH + H(+). The enzyme catalyses 3-deoxyfructose + NADP(+) = 3-deoxyglucosone + NADPH + H(+). It catalyses the reaction (R)-mevalonate + NADP(+) = (R)-mevaldate + NADPH + H(+). It carries out the reaction pyridine 3-methanol + NADP(+) = pyridine-3-carbaldehyde + NADPH + H(+). The catalysed reaction is S-nitroso-CoA + NADPH + H(+) = sulfinamide-CoA + NADP(+). The enzyme catalyses S-nitrosoglutathione + NADPH + H(+) = S-(hydroxysulfenamide)glutathione + NADP(+). Its function is as follows. Catalyzes the NADPH-dependent reduction of a wide variety of carbonyl-containing compounds to their corresponding alcohols. Displays enzymatic activity towards endogenous metabolites such as aromatic and aliphatic aldehydes, ketones, monosaccharides and bile acids, with a preference for negatively charged substrates, such as glucuronate and succinic semialdehyde. Plays an important role in ascorbic acid biosynthesis by catalyzing the reduction of D-glucuronic acid and D-glucurono-gamma-lactone. Functions as a detoxifiying enzyme by reducing a range of toxic aldehydes. Reduces methylglyoxal and 3-deoxyglucosone, which are present at elevated levels under hyperglycemic conditions and are cytotoxic. Involved also in the detoxification of lipid-derived aldehydes like acrolein. Plays a role in the activation of procarcinogens, such as polycyclic aromatic hydrocarbon trans-dihydrodiols, and in the metabolism of various xenobiotics and drugs. Also acts as an inhibitor of protein S-nitrosylation by mediating degradation of S-nitroso-coenzyme A (S-nitroso-CoA), a cofactor required to S-nitrosylate proteins. S-nitroso-CoA reductase activity is involved in reprogramming intermediary metabolism in renal proximal tubules, notably by inhibiting protein S-nitrosylation of isoform 2 of PKM (PKM2). Also acts as a S-nitroso-glutathione reductase by catalyzing the NADPH-dependent reduction of S-nitrosoglutathione. Displays no reductase activity towards retinoids. This is Aldo-keto reductase family 1 member A1 from Bos taurus (Bovine).